Reading from the N-terminus, the 660-residue chain is Secretin PulD (660 aa).

Residues 1–27 (MIIANVIRSFSLTLLIFAALLFRPAAA) form the signal peptide. An N0 region spans residues 28–124 (EEFSASFKGT…VASDAAPGIG (97 aa)). The interval 126–190 (EVVTRVVPLT…TIVERVDNAG (65 aa)) is N1. Residues 191–264 (DRSVVTVPLS…MIKQLDRQQA (74 aa)) form an N2 region. Residues 267 to 341 (GNTKVIYLKY…DLERVIAQLD (75 aa)) form an N3 region. Residues 346–596 (QVLVEAIIAE…LFIRPTVIRD (251 aa)) form a secretin region. A s domain region spans residues 598–660 (DEYRQASSGQ…IDAFNLGGNL (63 aa)).

The protein belongs to the bacterial secretin family. GSP D subfamily. As to quaternary structure, forms a cylindrical channel with 15 subunits.

It localises to the cell outer membrane. Functionally, involved in a type II secretion system (T2SS, formerly general secretion pathway, GSP) for the export of proteins. Required for the translocation of pullulanase. This subunit forms the outer membrane channel. This chain is Secretin PulD (pulD), found in Klebsiella pneumoniae.